A 432-amino-acid polypeptide reads, in one-letter code: Putative D-alanyl-D-alanine carboxypeptidase (432 aa).

The helical; Signal-anchor transmembrane segment at 7–25 threads the bilayer; sequence ATVLLTFSLSAFAVEYPVL.

This sequence belongs to the peptidase S12 family. YfeW subfamily.

The protein resides in the cell inner membrane. It carries out the reaction Preferential cleavage: (Ac)2-L-Lys-D-Ala-|-D-Ala. Also transpeptidation of peptidyl-alanyl moieties that are N-acyl substituents of D-alanine.. This is Putative D-alanyl-D-alanine carboxypeptidase from Salmonella gallinarum (strain 287/91 / NCTC 13346).